A 154-amino-acid chain; its full sequence is Interleukin-7 (154 aa).

An N-terminal signal peptide occupies residues 1-25 (MFHVSFRYIFGIPPLILVLLPVTSS). 3 cysteine pairs are disulfide-bonded: Cys-27/Cys-145, Cys-58/Cys-133, and Cys-71/Cys-116. N-linked (GlcNAc...) asparagine glycosylation is found at Asn-94 and Asn-115.

The protein belongs to the IL-7/IL-9 family. As to quaternary structure, interacts with IL7R and CSF2RG. Post-translationally, three disulfide bonds are present.

The protein localises to the secreted. Functionally, hematopoietic cytokine that plays an essential role in the development, expansion, and survival of naive and memory T-cells and B-cells thereby regulating the number of mature lymphocytes and maintaining lymphoid homeostasis. Mechanistically, exerts its biological effects through a receptor composed of IL7RA subunit and the cytokine receptor common subunit gamma/CSF2RG. Binding to the receptor leads to activation of various kinases including JAK1 or JAK3 depending on the cell type and subsequently propagation of signals through activation of several downstream signaling pathways including the PI3K/Akt/mTOR or the JAK-STAT5. The sequence is that of Interleukin-7 (Il7) from Mus musculus (Mouse).